Reading from the N-terminus, the 349-residue chain is E3 ubiquitin-protein ligase SINA-like 10 (349 aa).

The segment at 1–77 (MARFSVCGGD…STSDDSDREV (77 aa)) is disordered. Residues 113-149 (CPICCEPLKIPIFQCDNGHLACTLCCTKVRNRCPSCT) form an RING-type; degenerate zinc finger. Residues 163-344 (VIEASRVSCL…NLQIWIGHGR (182 aa)) are SBD. The SIAH-type zinc-finger motif lies at 166–224 (ASRVSCLNAKYGCKESTSYGNRFSHEQVCVFTPCSCPILDCHYTGYYKDLNNHVRAEHK). 8 residues coordinate Zn(2+): Cys171, Cys178, His190, Cys194, Cys201, Cys206, His218, and His223.

Belongs to the SINA (Seven in absentia) family.

It catalyses the reaction S-ubiquitinyl-[E2 ubiquitin-conjugating enzyme]-L-cysteine + [acceptor protein]-L-lysine = [E2 ubiquitin-conjugating enzyme]-L-cysteine + N(6)-ubiquitinyl-[acceptor protein]-L-lysine.. It participates in protein modification; protein ubiquitination. Functionally, E3 ubiquitin-protein ligase that mediates ubiquitination and subsequent proteasomal degradation of target proteins. E3 ubiquitin ligases accept ubiquitin from an E2 ubiquitin-conjugating enzyme in the form of a thioester and then directly transfers the ubiquitin to targeted substrates. It probably triggers the ubiquitin-mediated degradation of different substrates. In Arabidopsis thaliana (Mouse-ear cress), this protein is E3 ubiquitin-protein ligase SINA-like 10.